Consider the following 330-residue polypeptide: Beta-ketoacyl-[acyl-carrier-protein] synthase III (330 aa).

Residues Cys115 and His255 contribute to the active site. An ACP-binding region spans residues 256–260 (QANFR). Asn285 is an active-site residue.

This sequence belongs to the thiolase-like superfamily. FabH family. In terms of assembly, homodimer.

The protein localises to the cytoplasm. It catalyses the reaction malonyl-[ACP] + acetyl-CoA + H(+) = 3-oxobutanoyl-[ACP] + CO2 + CoA. It participates in lipid metabolism; fatty acid biosynthesis. In terms of biological role, catalyzes the condensation reaction of fatty acid synthesis by the addition to an acyl acceptor of two carbons from malonyl-ACP. Catalyzes the first condensation reaction which initiates fatty acid synthesis and may therefore play a role in governing the total rate of fatty acid production. Possesses both acetoacetyl-ACP synthase and acetyl transacylase activities. Its substrate specificity determines the biosynthesis of branched-chain and/or straight-chain of fatty acids. In Helicobacter pylori (strain P12), this protein is Beta-ketoacyl-[acyl-carrier-protein] synthase III.